Reading from the N-terminus, the 211-residue chain is Thymidylate kinase (211 aa).

10 to 17 (GIDGSGKT) provides a ligand contact to ATP.

Belongs to the thymidylate kinase family.

It catalyses the reaction dTMP + ATP = dTDP + ADP. In terms of biological role, phosphorylation of dTMP to form dTDP in both de novo and salvage pathways of dTTP synthesis. The polypeptide is Thymidylate kinase (Prochlorococcus marinus (strain NATL1A)).